We begin with the raw amino-acid sequence, 640 residues long: Serine/threonine-protein kinase WNG1 (640 aa).

Residues 1-70 (MPEQDLASGF…GVLCTVEAGA (70 aa)) form the signal peptide. 2 disordered regions span residues 100–222 (PEVT…AQPT) and 237–280 (SHPD…DASN). The segment covering 104–120 (HASSEGSPQFESSLSQQ) has biased composition (polar residues). Positions 124 to 141 (RPADRGEAHNGEEPRKDA) are enriched in basic and acidic residues. Over residues 175-186 (QRQASSAAESLA) the composition is skewed to low complexity. A compositionally biased stretch (basic and acidic residues) spans 248 to 279 (FSKKQEGRRERRLAVRGDDSFARGHNRDRDAS). Positions 291-593 (WAKIAALATG…LKQVMEDPYF (303 aa)) constitute a Protein kinase domain. An ATP-binding site is contributed by lysine 395. The active-site Proton acceptor is the aspartate 486. The disordered stretch occupies residues 609–640 (PFRGDFSIDDPDAGGKMYIPPSKEQDHEQENE). The segment covering 631–640 (KEQDHEQENE) has biased composition (basic and acidic residues).

Belongs to the protein kinase superfamily. STE Ser/Thr protein kinase family. WNG subfamily. Mg(2+) is required as a cofactor.

It localises to the cytoplasmic granule. The protein resides in the secreted. Its subcellular location is the parasitophorous vacuole lumen. The enzyme catalyses L-seryl-[protein] + ATP = O-phospho-L-seryl-[protein] + ADP + H(+). It carries out the reaction L-threonyl-[protein] + ATP = O-phospho-L-threonyl-[protein] + ADP + H(+). Its function is as follows. Serine/threonine-protein kinase which, at the tachyzoite stage, phosphorylates several parasitophorous vacuole (PV)-resident proteins such as GRA2, GRA6 and GRA7. By phosphorylating GRA2 and GRA6, regulates the formation of a functional intravacuolar network (IVN); IVN is composed of membranous tubules that bud from the PV membrane into the vacuolar lumen. Plays a role in the establishement of chronic infection in the host by controlling cyst formation in the host tissues. In Toxoplasma gondii, this protein is Serine/threonine-protein kinase WNG1.